Here is a 676-residue protein sequence, read N- to C-terminus: A-type ATP synthase subunit I (676 aa).

8 helical membrane-spanning segments follow: residues 341 to 361 (VFIAIFFPIFFGMMLGDIGYG), 390 to 410 (AGVMSIIFGFIYGECFGPFIV), 449 to 469 (ILLFATIVIGIAKILFGFALG), 490 to 510 (IIGVLGLAMIIFGFAYNVGVF), 538 to 558 (LNVYYLAALPLLVVWFILFVM), 564 to 584 (MGAMGVILAVELLTWFGQIMS), 590 to 610 (AIGLSSVYIAFVINFIGMKLI), and 617 to 637 (IPIVGAIVLLIGHVGNLILGI).

It belongs to the V-ATPase 116 kDa subunit family. As to quaternary structure, has multiple subunits with at least A(3), B(3), C, D, E, F, H, I and proteolipid K(x).

The protein localises to the cell membrane. In terms of biological role, component of the A-type ATP synthase that produces ATP from ADP in the presence of a proton gradient across the membrane. The polypeptide is A-type ATP synthase subunit I (Archaeoglobus fulgidus (strain ATCC 49558 / DSM 4304 / JCM 9628 / NBRC 100126 / VC-16)).